The sequence spans 620 residues: Chaperone protein HscA homolog (620 aa).

The protein belongs to the heat shock protein 70 family.

Chaperone involved in the maturation of iron-sulfur cluster-containing proteins. Has a low intrinsic ATPase activity which is markedly stimulated by HscB. This chain is Chaperone protein HscA homolog, found in Bordetella petrii (strain ATCC BAA-461 / DSM 12804 / CCUG 43448).